The following is a 406-amino-acid chain: Lissencephaly-1 homolog (406 aa).

The 33-residue stretch at 7–39 folds into the LisH domain; the sequence is QREELNKAIADYLRSNGYESALEAFQKEAEMPG. A coiled-coil region spans residues 54–81; it reads TSVIRLQKKVMDLEAKLAEAEKEFQSGG. Basic and acidic residues predominate over residues 74–89; sequence EKEFQSGGPNKKERSP. Residues 74–99 are disordered; it reads EKEFQSGGPNKKERSPSEWIPRPPAR. 7 WD repeats span residues 104–145, 146–185, 188–227, 230–269, 272–329, 332–371, and 374–406; these read GHRS…RTLK, GHTD…NIKT, GHDH…CVKT, GHRE…CKAE, EHEH…CIMT, GHDN…CQKT, and AHQH…WECR.

The protein belongs to the WD repeat LIS1/nudF family.

It localises to the cytoplasm. The protein localises to the cytoskeleton. It is found in the microtubule organizing center. Its subcellular location is the centrosome. Functionally, positively regulates the activity of the minus-end directed microtubule motor protein dynein. May enhance dynein-mediated microtubule sliding by targeting dynein to the microtubule plus end. Required for several dynein- and microtubule-dependent processes. In Branchiostoma floridae (Florida lancelet), this protein is Lissencephaly-1 homolog.